The following is a 238-amino-acid chain: tRNA (guanine-N(7)-)-methyltransferase (238 aa).

Glutamate 70, aspartate 95, aspartate 122, and aspartate 145 together coordinate S-adenosyl-L-methionine. Residue aspartate 145 is part of the active site. Residues lysine 149, aspartate 181, and 216–219 each bind substrate; that span reads TKFE.

The protein belongs to the class I-like SAM-binding methyltransferase superfamily. TrmB family.

It catalyses the reaction guanosine(46) in tRNA + S-adenosyl-L-methionine = N(7)-methylguanosine(46) in tRNA + S-adenosyl-L-homocysteine. It participates in tRNA modification; N(7)-methylguanine-tRNA biosynthesis. Catalyzes the formation of N(7)-methylguanine at position 46 (m7G46) in tRNA. This Neisseria meningitidis serogroup B (strain ATCC BAA-335 / MC58) protein is tRNA (guanine-N(7)-)-methyltransferase.